A 347-amino-acid chain; its full sequence is Holliday junction branch migration complex subunit RuvB (347 aa).

A large ATPase domain (RuvB-L) region spans residues 1–186; it reads MKDENSISFL…FGITARFELY (186 aa). ATP is bound by residues leucine 25, arginine 26, glycine 67, lysine 70, threonine 71, threonine 72, 133-135, arginine 176, tyrosine 186, and arginine 223; that span reads EDY. Residue threonine 71 coordinates Mg(2+). The small ATPAse domain (RuvB-S) stretch occupies residues 187–257; it reads SEIELVEIIK…IVSIGLEMLR (71 aa). Residues 260–347 are head domain (RuvB-H); that stretch reads GEGLDEQDRN…GLNENQRVSF (88 aa). DNA-binding residues include arginine 315 and arginine 320.

Belongs to the RuvB family. As to quaternary structure, homohexamer. Forms an RuvA(8)-RuvB(12)-Holliday junction (HJ) complex. HJ DNA is sandwiched between 2 RuvA tetramers; dsDNA enters through RuvA and exits via RuvB. An RuvB hexamer assembles on each DNA strand where it exits the tetramer. Each RuvB hexamer is contacted by two RuvA subunits (via domain III) on 2 adjacent RuvB subunits; this complex drives branch migration. In the full resolvosome a probable DNA-RuvA(4)-RuvB(12)-RuvC(2) complex forms which resolves the HJ.

Its subcellular location is the cytoplasm. It carries out the reaction ATP + H2O = ADP + phosphate + H(+). Functionally, the RuvA-RuvB-RuvC complex processes Holliday junction (HJ) DNA during genetic recombination and DNA repair, while the RuvA-RuvB complex plays an important role in the rescue of blocked DNA replication forks via replication fork reversal (RFR). RuvA specifically binds to HJ cruciform DNA, conferring on it an open structure. The RuvB hexamer acts as an ATP-dependent pump, pulling dsDNA into and through the RuvAB complex. RuvB forms 2 homohexamers on either side of HJ DNA bound by 1 or 2 RuvA tetramers; 4 subunits per hexamer contact DNA at a time. Coordinated motions by a converter formed by DNA-disengaged RuvB subunits stimulates ATP hydrolysis and nucleotide exchange. Immobilization of the converter enables RuvB to convert the ATP-contained energy into a lever motion, pulling 2 nucleotides of DNA out of the RuvA tetramer per ATP hydrolyzed, thus driving DNA branch migration. The RuvB motors rotate together with the DNA substrate, which together with the progressing nucleotide cycle form the mechanistic basis for DNA recombination by continuous HJ branch migration. Branch migration allows RuvC to scan DNA until it finds its consensus sequence, where it cleaves and resolves cruciform DNA. This chain is Holliday junction branch migration complex subunit RuvB, found in Borreliella burgdorferi (strain ATCC 35210 / DSM 4680 / CIP 102532 / B31) (Borrelia burgdorferi).